The following is a 457-amino-acid chain: Phosphomethylpyrimidine synthase (457 aa).

Substrate is bound by residues Asn-80, Met-109, Tyr-139, His-175, 195 to 197 (SRG), 236 to 239 (DSLR), and Glu-275. His-279 serves as a coordination point for Zn(2+). Tyr-302 is a binding site for substrate. Residue His-343 participates in Zn(2+) binding. Cys-423, Cys-426, and Cys-431 together coordinate [4Fe-4S] cluster.

The protein belongs to the ThiC family. [4Fe-4S] cluster is required as a cofactor.

It carries out the reaction 5-amino-1-(5-phospho-beta-D-ribosyl)imidazole + S-adenosyl-L-methionine = 4-amino-2-methyl-5-(phosphooxymethyl)pyrimidine + CO + 5'-deoxyadenosine + formate + L-methionine + 3 H(+). It functions in the pathway cofactor biosynthesis; thiamine diphosphate biosynthesis. Its function is as follows. Catalyzes the synthesis of the hydroxymethylpyrimidine phosphate (HMP-P) moiety of thiamine from aminoimidazole ribotide (AIR) in a radical S-adenosyl-L-methionine (SAM)-dependent reaction. The sequence is that of Phosphomethylpyrimidine synthase from Nostoc punctiforme (strain ATCC 29133 / PCC 73102).